The primary structure comprises 458 residues: Dihydrolipoyllysine-residue acetyltransferase component of pyruvate dehydrogenase complex, mitochondrial (458 aa).

A mitochondrion-targeting transit peptide spans 1 to 28 (MIVPVLSRQALRHASVARVALPSLTRWY). In terms of domain architecture, Lipoyl-binding spans 34 to 110 (HTVVKMPALS…AVGNPIAILV (77 aa)). Residue Lys75 is modified to N6-lipoyllysine. Residues 126-164 (DAGGETSPAVPKDEPKNESTASAPTPAPTPAPEPENTSF) form a disordered region. One can recognise a Peripheral subunit-binding (PSBD) domain in the interval 177-214 (NALPAAKRLAREKGIDLRNVKGSGPGGKITEEDVKKAL). Active-site residues include His431 and Asp435.

The protein belongs to the 2-oxoacid dehydrogenase family. The cofactor is (R)-lipoate.

The protein localises to the mitochondrion matrix. It carries out the reaction N(6)-[(R)-dihydrolipoyl]-L-lysyl-[protein] + acetyl-CoA = N(6)-[(R)-S(8)-acetyldihydrolipoyl]-L-lysyl-[protein] + CoA. Functionally, the pyruvate dehydrogenase complex catalyzes the overall conversion of pyruvate to acetyl-CoA and CO(2). It contains multiple copies of three enzymatic components: pyruvate dehydrogenase (E1), dihydrolipoamide acetyltransferase (E2) and lipoamide dehydrogenase (E3). In Neurospora crassa (strain ATCC 24698 / 74-OR23-1A / CBS 708.71 / DSM 1257 / FGSC 987), this protein is Dihydrolipoyllysine-residue acetyltransferase component of pyruvate dehydrogenase complex, mitochondrial (mrp-3).